Here is a 249-residue protein sequence, read N- to C-terminus: Leucyl/phenylalanyl-tRNA--protein transferase (249 aa).

The protein belongs to the L/F-transferase family.

It localises to the cytoplasm. It catalyses the reaction N-terminal L-lysyl-[protein] + L-leucyl-tRNA(Leu) = N-terminal L-leucyl-L-lysyl-[protein] + tRNA(Leu) + H(+). The enzyme catalyses N-terminal L-arginyl-[protein] + L-leucyl-tRNA(Leu) = N-terminal L-leucyl-L-arginyl-[protein] + tRNA(Leu) + H(+). It carries out the reaction L-phenylalanyl-tRNA(Phe) + an N-terminal L-alpha-aminoacyl-[protein] = an N-terminal L-phenylalanyl-L-alpha-aminoacyl-[protein] + tRNA(Phe). Functions in the N-end rule pathway of protein degradation where it conjugates Leu, Phe and, less efficiently, Met from aminoacyl-tRNAs to the N-termini of proteins containing an N-terminal arginine or lysine. This chain is Leucyl/phenylalanyl-tRNA--protein transferase, found in Xanthomonas axonopodis pv. citri (strain 306).